We begin with the raw amino-acid sequence, 201 residues long: Receptor expression-enhancing protein 1 (201 aa).

2 consecutive transmembrane segments (helical) span residues 1 to 21 (MVSWIISRLVVLIFGTLYPAY) and 35 to 55 (YVKWMMYWIIFALFTTAETFT). The residue at position 152 (Ser-152) is a Phosphoserine. A disordered region spans residues 158 to 201 (TIRGDGAPAPSGPPPPGTGRSSGKHSQPKMSRSASESAGSSGTA). Positions 188-201 (SRSASESAGSSGTA) are enriched in low complexity.

The protein belongs to the DP1 family. As to quaternary structure, interacts with OLFR992. Interacts with SPAST and ATL1. Interacts (via C-terminus) with microtubules. Interacts with ZFYVE27. Detected in olfactory sensory neurons of the olfactory epithelium, and in total brain.

It is found in the membrane. The protein localises to the mitochondrion membrane. The protein resides in the endoplasmic reticulum. Functionally, required for endoplasmic reticulum (ER) network formation, shaping and remodeling; it links ER tubules to the cytoskeleton. May also enhance the cell surface expression of odorant receptors. This Mus musculus (Mouse) protein is Receptor expression-enhancing protein 1 (Reep1).